The chain runs to 890 residues: DNA mismatch repair protein MutS (890 aa).

607–614 (GPNMSGKS) lines the ATP pocket.

It belongs to the DNA mismatch repair MutS family.

Functionally, this protein is involved in the repair of mismatches in DNA. It is possible that it carries out the mismatch recognition step. This protein has a weak ATPase activity. The chain is DNA mismatch repair protein MutS from Bacillus mycoides (strain KBAB4) (Bacillus weihenstephanensis).